We begin with the raw amino-acid sequence, 377 residues long: Glutamate 5-kinase (377 aa).

An ATP-binding site is contributed by Lys-20. Ser-59, Asp-146, and Asn-158 together coordinate substrate. ATP contacts are provided by residues 178-179 (SD) and 220-226 (TGGMSTK). The 79-residue stretch at 285 to 363 (RGTLTVDAGA…ADIEAVLGYR (79 aa)) folds into the PUA domain.

This sequence belongs to the glutamate 5-kinase family.

It localises to the cytoplasm. It carries out the reaction L-glutamate + ATP = L-glutamyl 5-phosphate + ADP. Its pathway is amino-acid biosynthesis; L-proline biosynthesis; L-glutamate 5-semialdehyde from L-glutamate: step 1/2. Catalyzes the transfer of a phosphate group to glutamate to form L-glutamate 5-phosphate. This chain is Glutamate 5-kinase, found in Myxococcus xanthus (strain DK1622).